Reading from the N-terminus, the 662-residue chain is MAVLTHGSPTPSGAYFDGKGINFTLFSAHAEQVTLCLFDEQGQERQIAMPARTGDIWHGYLPGGKPGQRYGYRVSGPFDPSRGHRFNPHKLLIDPRARALEGKVGDDPRFTGGVSQPDVRDSAAALPKCLVIHEEYDWQGDKPPAIPWGNTVVYEAHVRGLTQLHPDIPPELRGTYAALAHPALIEHLKTLGITTLELLPVQFHIDEPRLQKMGLSNYWGYNVLAPFAVDPDYASGREGISPLRELRDAVKALHNAGIEVILDVVFNHSAELDVFGPTLCQRGIDNASYYWLTPDGEYDNITGCGNALRLSHPYVTQWVIDCLNYWRDSCHVDGFRFDLGTVLGRTPAFDQHAPLFAALAADERLSACKLIAEPWDIGLGGYQLGNFPTGFSEWNDQYRDAMRGFWLRGEVPRGTFAQHFAASSRLFEQRGRLPSASINQITAHDGFTLLDLLCFNQKHNQMNGEENRDGSDNNHSNNFGCEGLVADAAIWQRRKACQRALLTTLLLSQGTPMLLAGDEQGHSQQGNNNAYCQNNILTWLDWGSADRALMTFTADLIRLRQQIPALTQDQWWQSGDSNVQWLDSQGQALSDAAWEQGCQQQLQILLSQRWLVLINATDHECEMHLPEGEWEGIPPFGVSDHAERLTTWRGSAHTICVLIKRD.

The active-site Nucleophile is the Asp-338. Glu-373 (proton donor) is an active-site residue.

The protein belongs to the glycosyl hydrolase 13 family.

It catalyses the reaction Hydrolysis of (1-&gt;6)-alpha-D-glucosidic linkages to branches with degrees of polymerization of three or four glucose residues in limit dextrin.. It functions in the pathway glycan degradation; glycogen degradation. Functionally, removes maltotriose and maltotetraose chains that are attached by 1,6-alpha-linkage to the limit dextrin main chain, generating a debranched limit dextrin. This chain is Glycogen debranching enzyme, found in Yersinia pseudotuberculosis serotype IB (strain PB1/+).